The primary structure comprises 147 residues: MGTLEKKLDNLVNTILLKAENQHELLFGACQSDVKLTNTQEHILMLLSQQRLTNTDLAKALNISQAAVTKAIKSLVKQDMLAGTKDTVDARVTYFELTELAKPIASEHTHHHDETLNVYNRLLQKFSAKELEIVDKFVTVFAEELEG.

An HTH marR-type domain is found at 1 to 143 (MGTLEKKLDN…VDKFVTVFAE (143 aa)). Zn(2+)-binding residues include Glu-24, Cys-30, Glu-41, and His-42. Residues 54-77 (NTDLAKALNISQAAVTKAIKSLVK) constitute a DNA-binding region (H-T-H motif). Positions 107, 108, and 112 each coordinate Zn(2+).

As to quaternary structure, homodimer.

Zinc acts as a coregulator and is required for DNA-binding activity. Functionally, zinc-responsive regulator. The sequence is that of Transcriptional regulator AdcR (adcR) from Streptococcus pyogenes serotype M6 (strain ATCC BAA-946 / MGAS10394).